A 155-amino-acid chain; its full sequence is MSRRGTTEKQIEKPDPIYRNRLVNLLVNRILRNGKKSLAYRILYGAMRNIRRATKKNPLSVLRQAVRRVTPNVTVKARRVGGSTYQVPIEIESSQGKALAIRWLLVASKKRPGRNMAFKLSYELIDAARDNGNAVRKREETHRMAEANRAFAHFR.

Belongs to the universal ribosomal protein uS7 family. As to quaternary structure, part of the 30S ribosomal subunit.

The protein resides in the plastid. Its subcellular location is the chloroplast. Functionally, one of the primary rRNA binding proteins, it binds directly to 16S rRNA where it nucleates assembly of the head domain of the 30S subunit. The polypeptide is Small ribosomal subunit protein uS7cz/uS7cy (rps7-A) (Anthoceros angustus (Hornwort)).